The following is an 825-amino-acid chain: E3 ubiquitin-protein ligase ICP0 (825 aa).

Polar residues predominate over residues 1–10 (MEPRPGTSSR). The interval 1-121 (MEPRPGTSSR…VGEEEAEAGG (121 aa)) is disordered. Positions 46 to 57 (DSEEETEVGISD) are enriched in acidic residues. Residues 126-167 (CAVCTDEIAPPLRCQSFPCLHPFCIPCMKTWIPLRNTCPLCN) form an RING-type zinc finger. Disordered regions lie at residues 221 to 312 (RSLS…GGGP), 325 to 683 (PPAA…PAPG), and 803 to 825 (RHPW…GHGE). The segment covering 242 to 251 (TDDEDDDLAD) has biased composition (acidic residues). Low complexity-rich tracts occupy residues 273–283 (TRGTSQPAATR), 290–303 (PRSS…LRAG), and 350–367 (PPAR…VISD). The segment covering 368-379 (SPPPSPRRPAGP) has biased composition (pro residues). 2 stretches are compositionally biased toward low complexity: residues 380–394 (GPLS…QVSS) and 402–439 (PQSS…DAAG). Over residues 456 to 468 (RMTQAQTDTQAQS) the composition is skewed to polar residues. Gly residues predominate over residues 479–491 (GSGGPGAEGGPGV). Low complexity-rich tracts occupy residues 492-510 (PRGT…GAAA) and 519-540 (DSGP…PLAP). Residues 552–563 (RAPDSDSGDRGH) show a composition bias toward basic and acidic residues. Residues 567 to 641 (APASAGAAPP…GGSVASASGA (75 aa)) show a composition bias toward low complexity. The segment covering 658–667 (GPRKCARKTR) has biased composition (basic residues). A compositionally biased stretch (low complexity) spans 811-825 (GAPAPAGDAPAGHGE).

In terms of processing, auto-ubiquitinated.

The enzyme catalyses S-ubiquitinyl-[E2 ubiquitin-conjugating enzyme]-L-cysteine + [acceptor protein]-L-lysine = [E2 ubiquitin-conjugating enzyme]-L-cysteine + N(6)-ubiquitinyl-[acceptor protein]-L-lysine.. Functionally, evades nuclear antiviral defenses triggered by dsDNA viruses. Acts during the initial stages of lytic infection and the reactivation of latent viral genome. Prevents the antiviral effect of nuclear bodies by degrading host PML and SP100. Prevents antiviral response to viral DNA induced by IFI16 by degrading it. Additionally, inhibits host IRF3 nuclear signaling to prevent interferon production by the infected cells. The protein is E3 ubiquitin-protein ligase ICP0 (RL2) of Homo sapiens (Human).